We begin with the raw amino-acid sequence, 325 residues long: Large ribosomal subunit protein uL18 (325 aa).

Residues 247-300 (IRIPPSRRNPRRRSPRSGGRWPSCRSPPARRRSRSTRPTSWPRSRPTSKPKRPR) form a disordered region. Low complexity-rich tracts occupy residues 262–273 (RSGGRWPSCRSP) and 282–291 (TRPTSWPRSR).

Belongs to the universal ribosomal protein uL18 family. In terms of assembly, component of the large ribosomal subunit (LSU).

It localises to the cytoplasm. It is found in the nucleus. Component of the ribosome, a large ribonucleoprotein complex responsible for the synthesis of proteins in the cell. The small ribosomal subunit (SSU) binds messenger RNAs (mRNAs) and translates the encoded message by selecting cognate aminoacyl-transfer RNA (tRNA) molecules. The large subunit (LSU) contains the ribosomal catalytic site termed the peptidyl transferase center (PTC), which catalyzes the formation of peptide bonds, thereby polymerizing the amino acids delivered by tRNAs into a polypeptide chain. The nascent polypeptides leave the ribosome through a tunnel in the LSU and interact with protein factors that function in enzymatic processing, targeting, and the membrane insertion of nascent chains at the exit of the ribosomal tunnel. The polypeptide is Large ribosomal subunit protein uL18 (RpL5) (Anopheles gambiae (African malaria mosquito)).